A 303-amino-acid polypeptide reads, in one-letter code: MSTTLSSSTYGKDNVKFLKVKKDPQNPKKQEVMEATVTCLLEGGFDTSYTEADNSSIVPTDTVKNTILVLAKTTEIWPIERFAAKLATHFVEKYSHVSGVSVKIVQDRWVKYAVDGKPHDHSFIHEGGEKRITDLYYKRSGDYKLSSAIKDLTVLKSTGSMFYGYNKCDFTTLQPTTDRILSTDVDATWVWDNKKIGSVYDIAKAADKGIFDNVYNQAREITLTTFALENSPSVQATMFNMATQILEKACSVYSVSYALPNKHYFLIDLKWKGLENDNELFYPSPHPNGLIKCTVVRKEKTKL.

Residues K12 and T60 each act as charge relay system in the active site. Residues T60, D61, F162, R179, V234, Q235, and N261 each contribute to the urate site. H263 serves as the catalytic Charge relay system. The Microbody targeting signal motif lies at 301–303; that stretch reads TKL.

The protein belongs to the uricase family.

The protein localises to the peroxisome. The catalysed reaction is urate + O2 + H2O = 5-hydroxyisourate + H2O2. It participates in purine metabolism; urate degradation; (S)-allantoin from urate: step 1/3. In terms of biological role, catalyzes the oxidation of uric acid to 5-hydroxyisourate, which is further processed to form (S)-allantoin. In Cyberlindnera jadinii (Torula yeast), this protein is Uricase.